The primary structure comprises 131 residues: Agouti-signaling protein (131 aa).

A signal peptide spans 1-20 (MNIFRLLLATLLVSLCFLTA). Asparagine 38 carries N-linked (GlcNAc...) asparagine glycosylation. A disordered region spans residues 57-104 (KSKKISRKEAEKKRSSKKKASMKNVARPRPPPPNPCVATRNSCKSPAP). Disulfide bonds link cysteine 92–cysteine 107, cysteine 99–cysteine 113, cysteine 106–cysteine 124, cysteine 110–cysteine 131, and cysteine 115–cysteine 122. The Agouti domain occupies 92 to 131 (CVATRNSCKSPAPACCDPCASCQCRFFRSACTCRVLSPSC).

The protein resides in the secreted. In terms of biological role, involved in the regulation of melanogenesis. The binding of ASP to MC1R precludes alpha-MSH initiated signaling and thus blocks production of cAMP, leading to a down-regulation of eumelanogenesis (brown/black pigment) and thus increasing synthesis of pheomelanin (yellow/red pigment). In Vulpes vulpes (Red fox), this protein is Agouti-signaling protein (ASIP).